The primary structure comprises 1072 residues: Vacuolar membrane protease (1072 aa).

At M1–P9 the chain is on the cytoplasmic side. Residues G10–I30 form a helical membrane-spanning segment. At N31–M404 the chain is on the vacuolar side. N-linked (GlcNAc...) asparagine glycosylation is found at N48, N116, N119, and N128. 2 residues coordinate Zn(2+): H185 and D197. The active-site Proton acceptor is E231. E232, E257, and H330 together coordinate Zn(2+). A helical transmembrane segment spans residues F405–L425. At L426–G457 the chain is on the cytoplasmic side. The chain crosses the membrane as a helical span at residues F458–L478. Topologically, residues M479–Y492 are vacuolar. The helical transmembrane segment at S493–A513 threads the bilayer. The Cytoplasmic segment spans residues N514 to R523. The helical transmembrane segment at G524–L544 threads the bilayer. Over E545 to Y554 the chain is Vacuolar. A helical transmembrane segment spans residues I555 to L575. Topologically, residues A576 to H747 are cytoplasmic. The disordered stretch occupies residues G593 to F713. A compositionally biased stretch (basic and acidic residues) spans D606–A617. Residues G643–P661 show a composition bias toward polar residues. The chain crosses the membrane as a helical span at residues L748–A768. The Vacuolar portion of the chain corresponds to A769 to L789. Residues I790–F810 form a helical membrane-spanning segment. Residues I811–H817 lie on the Cytoplasmic side of the membrane. A helical transmembrane segment spans residues I818 to P838. The Vacuolar portion of the chain corresponds to F839–V1072. N-linked (GlcNAc...) asparagine glycosylation is found at N932 and N974.

Belongs to the peptidase M28 family. Zn(2+) is required as a cofactor.

It localises to the vacuole membrane. In terms of biological role, may be involved in vacuolar sorting and osmoregulation. The sequence is that of Vacuolar membrane protease from Neurospora crassa (strain ATCC 24698 / 74-OR23-1A / CBS 708.71 / DSM 1257 / FGSC 987).